We begin with the raw amino-acid sequence, 65 residues long: DNA-directed RNA polymerase subunit Rpo10 (65 aa).

The Zn(2+) site is built by Cys7, Cys10, Cys44, and Cys45.

It belongs to the archaeal Rpo10/eukaryotic RPB10 RNA polymerase subunit family. In terms of assembly, part of the RNA polymerase complex. Zn(2+) is required as a cofactor.

It is found in the cytoplasm. Its subcellular location is the chromosome. It catalyses the reaction RNA(n) + a ribonucleoside 5'-triphosphate = RNA(n+1) + diphosphate. In terms of biological role, DNA-dependent RNA polymerase (RNAP) catalyzes the transcription of DNA into RNA using the four ribonucleoside triphosphates as substrates. The polypeptide is DNA-directed RNA polymerase subunit Rpo10 (Thermococcus kodakarensis (strain ATCC BAA-918 / JCM 12380 / KOD1) (Pyrococcus kodakaraensis (strain KOD1))).